Here is a 343-residue protein sequence, read N- to C-terminus: Small ribosomal subunit biogenesis GTPase RsgA (343 aa).

Positions 116-275 constitute a CP-type G domain; it reads RGQLKPVAAN…LIDSPGIREF (160 aa). GTP contacts are provided by residues 163–166 and 217–225; these read NKFD and GQSGVGKSS. Zn(2+) contacts are provided by cysteine 299, cysteine 304, histidine 306, and cysteine 312.

This sequence belongs to the TRAFAC class YlqF/YawG GTPase family. RsgA subfamily. Monomer. Associates with 30S ribosomal subunit, binds 16S rRNA. The cofactor is Zn(2+).

The protein resides in the cytoplasm. One of several proteins that assist in the late maturation steps of the functional core of the 30S ribosomal subunit. Helps release RbfA from mature subunits. May play a role in the assembly of ribosomal proteins into the subunit. Circularly permuted GTPase that catalyzes slow GTP hydrolysis, GTPase activity is stimulated by the 30S ribosomal subunit. The polypeptide is Small ribosomal subunit biogenesis GTPase RsgA (Pseudomonas fluorescens (strain Pf0-1)).